The following is a 98-amino-acid chain: HssA/B-like protein 36 (98 aa).

Residues 1–29 are disordered; sequence MTLFSSISSISNPMTSSKSSISSFGSGTS.

This sequence belongs to the hssA/B family.

The protein is HssA/B-like protein 36 (hssl36) of Dictyostelium discoideum (Social amoeba).